We begin with the raw amino-acid sequence, 322 residues long: L-asparaginase (322 aa).

The 320-residue stretch at 3–322 (KKVALITTGG…KEGIKDKFCY (320 aa)) folds into the Asparaginase/glutaminase domain. Catalysis depends on T13, which acts as the O-isoaspartyl threonine intermediate. Substrate is bound by residues S56 and 89–90 (TD).

The protein belongs to the asparaginase 1 family. In terms of assembly, homotetramer.

Its subcellular location is the cytoplasm. The enzyme catalyses L-asparagine + H2O = L-aspartate + NH4(+). The polypeptide is L-asparaginase (ansA) (Bacillus licheniformis).